A 261-amino-acid polypeptide reads, in one-letter code: Pantothenate synthetase (261 aa).

ATP is bound at residue 29-36; it reads MGALHNGH. The active-site Proton donor is histidine 36. Glutamine 60 lines the (R)-pantoate pocket. Residue glutamine 60 participates in beta-alanine binding. 147 to 150 provides a ligand contact to ATP; the sequence is GEKD. Glutamine 153 is a binding site for (R)-pantoate. ATP is bound at residue 184-187; that stretch reads LSSR.

This sequence belongs to the pantothenate synthetase family. Homodimer.

Its subcellular location is the cytoplasm. It carries out the reaction (R)-pantoate + beta-alanine + ATP = (R)-pantothenate + AMP + diphosphate + H(+). It participates in cofactor biosynthesis; (R)-pantothenate biosynthesis; (R)-pantothenate from (R)-pantoate and beta-alanine: step 1/1. In terms of biological role, catalyzes the condensation of pantoate with beta-alanine in an ATP-dependent reaction via a pantoyl-adenylate intermediate. The sequence is that of Pantothenate synthetase from Francisella tularensis subsp. tularensis (strain FSC 198).